The primary structure comprises 517 residues: MAHQTQRRDTADTMTEVEVWDSRTAQEVNKSLYPPAVTNPFTHHTQLSAWQLACSIFLGTVLVPVRVSCIVFLFLLLWPVALLSTINLPIQPTEPVKSWRKHLIKPVFIFLLRLAFFCAGFLIKVKGKKATREEAPIFVVAPHSTFFDAIAVIVAGLPSVVSDTQHVRIPLVGQCILLTQPVLVRREDPNSRKTTRNEILSRVKSKMKWPQILIFPEGLCTNRSCLVTFKLGAFSPGVPVQPVLLRYPNTLDTVTWTWHGFSGFQVCMLTLSQPFTRMEVEFMPVYIPNEDEKKDPILFANTVRINMANALKLPVTDHSFEDCKLMISAGALRLPMEAGLVEFTKISQKLKLDWDNIHTHLDKYASVAVSSKGGKIGIEEFSRYLKLPISEPLRQLFSLFDRNQDGTIDFREYVIGLTVLCNPANTEKILQMSFKLFDLDEDGYITEQELTTMLRAAFGVPDLDVSTLFQQMAGKDSAQVSYRTFRRFALKHPAYAKLFHSYIDLQAAYIYSLPGEV.

An N-linked (GlcNAc...) asparagine glycan is attached at asparagine 29. The next 3 helical transmembrane spans lie at 70–90 (IVFL…NLPI), 103–123 (LIKP…GFLI), and 137–157 (IFVV…VAGL). An HXXXXD motif motif is present at residues 143–148 (HSTFFD). EF-hand domains lie at 388 to 423 (PISE…LCNP) and 425 to 460 (NTEK…AFGV). The Ca(2+) site is built by aspartate 401, asparagine 403, aspartate 405, threonine 407, glutamate 412, aspartate 438, aspartate 440, aspartate 442, tyrosine 444, and glutamate 449.

This sequence belongs to the 1-acyl-sn-glycerol-3-phosphate acyltransferase family.

The protein resides in the membrane. The protein operates within lipid metabolism; phospholipid metabolism. Its function is as follows. Probable acetyltransferase. This Rattus norvegicus (Rat) protein is Lysophosphatidylcholine acyltransferase 2B (Lpcat2b).